Here is a 347-residue protein sequence, read N- to C-terminus: Vitellogenin-3 (347 aa).

A signal peptide spans 1–15 (MRGFILALVLALVGA). Asn80 carries an N-linked (GlcNAc...) asparagine glycan. Low complexity predominate over residues 104–118 (PSATPLSSSSSTDSS). Disordered regions lie at residues 104 to 174 (PSAT…DKHC) and 200 to 234 (QDPR…MFLG). Basic and acidic residues predominate over residues 124-133 (PGNKRDKDEI). Low complexity predominate over residues 144–163 (SSSSSSSSSTGSGSSKTCSS). Residues 164–174 (SREDSSRDKHC) show a composition bias toward basic and acidic residues. Asn208 carries an N-linked (GlcNAc...) asparagine glycan. Low complexity predominate over residues 209-219 (SSISSSSSSSS).

Post-translationally, phosvitin, an egg yolk storage protein, is one of the most highly phosphorylated (10%) proteins in nature. In terms of processing, cathepsin D is responsible for intraoocytic processing of vitellogenin. May contain intrachain disulfide bonds. Produced by the liver, secreted into the blood and then sequestered by receptor mediated endocytosis into growing oocytes, where it is generally cleaved, giving rise to the respective yolk components.

Precursor of the egg-yolk proteins that are sources of nutrients during early development of oviparous organisms. Functionally, phosvitin is believed to be of importance in sequestering calcium, iron and other cations for the developing embryo. This chain is Vitellogenin-3 (VTG3), found in Gallus gallus (Chicken).